Here is a 334-residue protein sequence, read N- to C-terminus: Retinol dehydrogenase 14 (334 aa).

51 to 57 contacts NADP(+); sequence GANSGLG. Substrate is bound at residue S190. Residue Y215 is the Proton acceptor of the active site.

It belongs to the short-chain dehydrogenases/reductases (SDR) family.

It carries out the reaction all-trans-retinol + NADP(+) = all-trans-retinal + NADPH + H(+). The catalysed reaction is 11-cis-retinol + NADP(+) = 11-cis-retinal + NADPH + H(+). It catalyses the reaction 9-cis-retinol + NADP(+) = 9-cis-retinal + NADPH + H(+). Retinol dehydrogenase with a clear preference for NADP. Displays high activity towards 9-cis, 11-cis and all-trans-retinol. Shows a very weak activity towards 13-cis-retinol. Has no activity towards steroids. This is Retinol dehydrogenase 14 (Rdh14) from Mus musculus (Mouse).